Reading from the N-terminus, the 440-residue chain is 3-phosphoshikimate 1-carboxyvinyltransferase (440 aa).

3-phosphoshikimate is bound by residues K25, S26, and R30. K25 serves as a coordination point for phosphoenolpyruvate. Residues G96 and R124 each coordinate phosphoenolpyruvate. 3-phosphoshikimate contacts are provided by S168, Q169, D310, and K337. A phosphoenolpyruvate-binding site is contributed by Q169. The active-site Proton acceptor is the D310. Phosphoenolpyruvate contacts are provided by R341, R382, and K409.

It belongs to the EPSP synthase family. In terms of assembly, monomer.

Its subcellular location is the cytoplasm. The catalysed reaction is 3-phosphoshikimate + phosphoenolpyruvate = 5-O-(1-carboxyvinyl)-3-phosphoshikimate + phosphate. It participates in metabolic intermediate biosynthesis; chorismate biosynthesis; chorismate from D-erythrose 4-phosphate and phosphoenolpyruvate: step 6/7. Its function is as follows. Catalyzes the transfer of the enolpyruvyl moiety of phosphoenolpyruvate (PEP) to the 5-hydroxyl of shikimate-3-phosphate (S3P) to produce enolpyruvyl shikimate-3-phosphate and inorganic phosphate. In Chlamydia trachomatis serovar D (strain ATCC VR-885 / DSM 19411 / UW-3/Cx), this protein is 3-phosphoshikimate 1-carboxyvinyltransferase.